The chain runs to 512 residues: Proline--tRNA ligase (512 aa).

The segment covering 460-470 (SDEDDEQDTTD) has biased composition (acidic residues). Positions 460–484 (SDEDDEQDTTDENMGVNNDTTVESN) are disordered.

The protein belongs to the class-II aminoacyl-tRNA synthetase family. ProS type 3 subfamily. Homodimer.

It localises to the cytoplasm. The catalysed reaction is tRNA(Pro) + L-proline + ATP = L-prolyl-tRNA(Pro) + AMP + diphosphate. Functionally, catalyzes the attachment of proline to tRNA(Pro) in a two-step reaction: proline is first activated by ATP to form Pro-AMP and then transferred to the acceptor end of tRNA(Pro). This Haloquadratum walsbyi (strain DSM 16790 / HBSQ001) protein is Proline--tRNA ligase.